We begin with the raw amino-acid sequence, 134 residues long: Citrolysin protein 2 (134 aa).

This Citrobacter freundii protein is Citrolysin protein 2.